The primary structure comprises 400 residues: GTPase Obg (400 aa).

The 159-residue stretch at 1 to 159 folds into the Obg domain; sequence MRFVDEAVIT…REIRLELKVL (159 aa). An OBG-type G domain is found at 160–333; sequence ADVGLLGMPN…VVYYLMDQIE (174 aa). GTP-binding positions include 166-173, 191-195, 213-216, 283-286, and 314-316; these read GMPNAGKS, FTTMV, DIPG, NKLD, and SGL. Residues Ser-173 and Thr-193 each coordinate Mg(2+).

The protein belongs to the TRAFAC class OBG-HflX-like GTPase superfamily. OBG GTPase family. Monomer. Mg(2+) is required as a cofactor.

The protein resides in the cytoplasm. Functionally, an essential GTPase which binds GTP, GDP and possibly (p)ppGpp with moderate affinity, with high nucleotide exchange rates and a fairly low GTP hydrolysis rate. Plays a role in control of the cell cycle, stress response, ribosome biogenesis and in those bacteria that undergo differentiation, in morphogenesis control. This Acinetobacter baylyi (strain ATCC 33305 / BD413 / ADP1) protein is GTPase Obg.